A 516-amino-acid chain; its full sequence is MSFSVDELARIAIDLQSDIGHTDRFSRLITTLRQILGCDASALLRYEAHQFVPLAIDGLAQDVLGRRFALEGHPRLEAIARAGDVVRFPADSDLPDPYDGLIPGHESLKVHACVGLPLFAGQTLIGALTLDGMDADRFDSFSDEELRLIAALVAGALNNALLIARLEAQNVLPVQPVNDAQPERQEIIGLSAPMLQLKKEIDIVAASDLNVLISGETGTGKELVAKAVHQGSPRAANPLVYLNCAALPESVAESELFGHVKGAFTGAISNRSGKFEMADNGTLFLDEIGELSLALQAKLLRVLQYGDIQRVGDDRSLRVDVRVLAATNRDLRQEVVEGRFRADLYHRLSVFPLSVPALRERENDVVLLAGYFCEQCRLRMGLARVILAEAARNRLQQWSWPGNVRELEHAIHRAVVLARATQAGDEVVLEPQHFQFAVAAPMLPTETAAAAPAIEKVNLREATDSFQREAISRALEANQRNWAATARALELDVANLHRLAKRLGLKGSPPGKNSAG.

The residue at position 57 (aspartate 57) is a 4-aspartylphosphate. One can recognise a Sigma-54 factor interaction domain in the interval 187 to 416 (IIGLSAPMLQ…LEHAIHRAVV (230 aa)). ATP is bound by residues 215–222 (GETGTGKE) and 278–287 (ADNGTLFLDE). Residues 482–501 (WAATARALELDVANLHRLAK) constitute a DNA-binding region (H-T-H motif).

The protein operates within nitrogen metabolism; nitric oxide reduction. In terms of biological role, required for the expression of anaerobic nitric oxide (NO) reductase, acts as a transcriptional activator for at least the norVW operon. Activation also requires sigma-54. This chain is Anaerobic nitric oxide reductase transcription regulator NorR, found in Klebsiella pneumoniae (strain 342).